The primary structure comprises 213 residues: Histidine biosynthesis bifunctional protein HisIE (213 aa).

Residues 1–114 form a phosphoribosyl-AMP cyclohydrolase region; that stretch reads MLTTEKYQGL…FHPALTDFSF (114 aa). Positions 115–213 are phosphoribosyl-ATP pyrophosphohydrolase; that stretch reads LFQLENIISI…RVRSKLKKKH (99 aa).

It in the N-terminal section; belongs to the PRA-CH family. In the C-terminal section; belongs to the PRA-PH family.

The protein localises to the cytoplasm. It carries out the reaction 1-(5-phospho-beta-D-ribosyl)-ATP + H2O = 1-(5-phospho-beta-D-ribosyl)-5'-AMP + diphosphate + H(+). The enzyme catalyses 1-(5-phospho-beta-D-ribosyl)-5'-AMP + H2O = 1-(5-phospho-beta-D-ribosyl)-5-[(5-phospho-beta-D-ribosylamino)methylideneamino]imidazole-4-carboxamide. It participates in amino-acid biosynthesis; L-histidine biosynthesis; L-histidine from 5-phospho-alpha-D-ribose 1-diphosphate: step 2/9. The protein operates within amino-acid biosynthesis; L-histidine biosynthesis; L-histidine from 5-phospho-alpha-D-ribose 1-diphosphate: step 3/9. This chain is Histidine biosynthesis bifunctional protein HisIE, found in Blochmanniella floridana.